The following is a 464-amino-acid chain: Protein FAM90A7 (464 aa).

3 disordered regions span residues methionine 1 to leucine 42, valine 69 to aspartate 387, and alanine 410 to proline 437. Basic and acidic residues-rich tracts occupy residues glycine 74–alanine 89 and asparagine 97–aspartate 111. Over residues leucine 180–leucine 197 the composition is skewed to low complexity.

The protein belongs to the FAM90 family.

The sequence is that of Protein FAM90A7 from Homo sapiens (Human).